A 117-amino-acid polypeptide reads, in one-letter code: Hemerythrin subunit beta (117 aa).

Positions 24, 53, 57, 72, 76, 105, and 110 each coordinate Fe cation.

Belongs to the hemerythrin family. In terms of assembly, octamer composed of two types of chains: alpha and beta.

Its function is as follows. Hemerythrin is a respiratory protein in blood cells of certain marine worms. The oxygen-binding site in each chain contains two iron atoms. The sequence is that of Hemerythrin subunit beta from Lingula anatina (Brachiopod).